Consider the following 98-residue polypeptide: NADH-ubiquinone oxidoreductase chain 4L (98 aa).

3 consecutive transmembrane segments (helical) span residues 1–21 (MTPTHFTISSAFLLGMMGLAF), 26–46 (LLSALLCLEAMMLALFIALSL), and 59–79 (APMLMLAFSACEASAGLALLV).

The protein belongs to the complex I subunit 4L family.

The protein localises to the mitochondrion membrane. The enzyme catalyses a ubiquinone + NADH + 5 H(+)(in) = a ubiquinol + NAD(+) + 4 H(+)(out). Functionally, core subunit of the mitochondrial membrane respiratory chain NADH dehydrogenase (Complex I) which catalyzes electron transfer from NADH through the respiratory chain, using ubiquinone as an electron acceptor. Part of the enzyme membrane arm which is embedded in the lipid bilayer and involved in proton translocation. This chain is NADH-ubiquinone oxidoreductase chain 4L (MT-ND4L), found in Gadus morhua (Atlantic cod).